A 240-amino-acid chain; its full sequence is Acyl-coenzyme A thioesterase THEM4 (240 aa).

The N-terminal 36 residues, 1–36, are a transit peptide targeting the mitochondrion; sequence MLRSCAARLRTLGALCLPPVGRRLPGSEPRPELRSF. Phosphoserine occurs at positions 37 and 38. N6-succinyllysine occurs at positions 55 and 66. Lysine 74 carries the post-translational modification N6-acetyllysine. Lysine 98 bears the N6-succinyllysine mark. Aspartate 161 functions as the Proton donor/acceptor in the catalytic mechanism. Substrate-binding positions include asparagine 183, lysine 185, and 206–207; that span reads RK. Lysine 207 is subject to N6-succinyllysine.

It belongs to the THEM4/THEM5 thioesterase family. In terms of assembly, homodimer and homotetramer. Interacts with AKT1 in the cytosol. In terms of processing, phosphorylated. Expressed predominantly in skeletal muscle, testis, uterus, brain and kidney. Down-regulated in glioblastoma or glioma compared to non-neoplastic brain due to promoter hypermethylation.

It localises to the cell membrane. The protein localises to the cell projection. It is found in the ruffle membrane. Its subcellular location is the cytoplasm. The protein resides in the mitochondrion. It localises to the mitochondrion inner membrane. The protein localises to the mitochondrion intermembrane space. It catalyses the reaction hexadecanoyl-CoA + H2O = hexadecanoate + CoA + H(+). The enzyme catalyses octanoyl-CoA + H2O = octanoate + CoA + H(+). The catalysed reaction is decanoyl-CoA + H2O = decanoate + CoA + H(+). It carries out the reaction dodecanoyl-CoA + H2O = dodecanoate + CoA + H(+). It catalyses the reaction tetradecanoyl-CoA + H2O = tetradecanoate + CoA + H(+). The enzyme catalyses (9Z)-octadecenoyl-CoA + H2O = (9Z)-octadecenoate + CoA + H(+). The catalysed reaction is (5Z,8Z,11Z,14Z)-eicosatetraenoyl-CoA + H2O = (5Z,8Z,11Z,14Z)-eicosatetraenoate + CoA + H(+). Functionally, has acyl-CoA thioesterase activity towards medium and long-chain (C14 to C18) fatty acyl-CoA substrates, and probably plays a role in mitochondrial fatty acid metabolism. Plays a role in the apoptotic process, possibly via its regulation of AKT1 activity. According to PubMed:11598301, inhibits AKT1 phosphorylation and activity. According to PubMed:17615157, enhances AKT1 activity by favoring its phosphorylation and translocation to plasma membrane. In Homo sapiens (Human), this protein is Acyl-coenzyme A thioesterase THEM4 (THEM4).